The sequence spans 294 residues: Nucleophosmin (294 aa).

Methionine 1 is modified (N-acetylmethionine). Positions 1-117 (MEDSMDMDMS…PVHISGQHLV (117 aa)) are necessary for interaction with APEX1. The interval 1-187 (MEDSMDMDMS…DDDDDFDEEV (187 aa)) is required for interaction with SENP3. Serine 4 carries the post-translational modification Phosphoserine; by PLK1 and PLK2. Residue serine 10 is modified to Phosphoserine. Lysine 32 carries the post-translational modification N6-acetyllysine; alternate. Residue lysine 32 forms a Glycyl lysine isopeptide (Lys-Gly) (interchain with G-Cter in SUMO1); alternate linkage. Lysine 32 is covalently cross-linked (Glycyl lysine isopeptide (Lys-Gly) (interchain with G-Cter in SUMO2); alternate). The residue at position 43 (serine 43) is a Phosphoserine. Phosphotyrosine is present on tyrosine 67. Serine 70 is subject to Phosphoserine. Phosphothreonine occurs at positions 75 and 95. The segment covering 121-132 (EDAESEEEEEEE) has biased composition (acidic residues). Residues 121 to 249 (EDAESEEEEE…GPSSVEDIKA (129 aa)) are disordered. Residue serine 125 is modified to Phosphoserine; by CDK2. Phosphoserine occurs at positions 137 and 139. A Glycyl lysine isopeptide (Lys-Gly) (interchain with G-Cter in SUMO2) cross-link involves residue lysine 141. The residue at position 150 (lysine 150) is an N6-acetyllysine; alternate. Lysine 150 participates in a covalent cross-link: Glycyl lysine isopeptide (Lys-Gly) (interchain with G-Cter in SUMO2); alternate. A Nuclear localization signal motif is present at residues 152–157 (PQKKVK). Residue lysine 154 is modified to N6-acetyllysine. Positions 161–188 (DEDEDDDDDDDDDDDEDDDDDDFDEEVE) are enriched in acidic residues. The interval 188 to 216 (EEKAPVKKSVRDTPAKNAQKSNQNGKDSK) is interaction with NOP2. Over residues 189–201 (EKAPVKKSVRDTP) the composition is skewed to basic and acidic residues. Positions 192–198 (PVKKSVR) match the Nuclear localization signal motif. Threonine 200 carries the post-translational modification Phosphothreonine; by CDK1 and CDK2. A compositionally biased stretch (polar residues) spans 203 to 222 (KNAQKSNQNGKDSKPSTPRS). The residue at position 208 (serine 208) is an ADP-ribosylserine. An N6-acetyllysine modification is found at lysine 213. A Glycyl lysine isopeptide (Lys-Gly) (interchain with G-Cter in SUMO2) cross-link involves residue lysine 216. Threonine 219 carries the post-translational modification Phosphothreonine; by CDK1. Basic and acidic residues predominate over residues 223-235 (KGQESFKKQEKTP). At serine 227 the chain carries Phosphoserine. Lysine 229 is modified (N6-acetyllysine). Lysine 230 is subject to N6-acetyllysine; alternate. Lysine 230 participates in a covalent cross-link: Glycyl lysine isopeptide (Lys-Gly) (interchain with G-Cter in SUMO); alternate. A phosphothreonine mark is found at threonine 234 and threonine 237. 2 positions are modified to phosphoserine: serine 242 and serine 243. The interval 243–294 (SVEDIKAKMQASIEKGGSLPKVEAKFINYVKNCFRMTDQEAIQDLWQWRKSL) is required for nucleolar localization. A Glycyl lysine isopeptide (Lys-Gly) (interchain with G-Cter in SUMO1); alternate cross-link involves residue lysine 248. Residues lysine 248 and lysine 250 each participate in a glycyl lysine isopeptide (Lys-Gly) (interchain with G-Cter in SUMO2); alternate cross-link. An N6-acetyllysine; alternate modification is found at lysine 250. Serine 254 carries the post-translational modification Phosphoserine. Lysine 257 carries the post-translational modification N6-acetyllysine; alternate. Lysine 257 is covalently cross-linked (Glycyl lysine isopeptide (Lys-Gly) (interchain with G-Cter in SUMO1); alternate). A Glycyl lysine isopeptide (Lys-Gly) (interchain with G-Cter in SUMO2); alternate cross-link involves residue lysine 257. Serine 260 bears the Phosphoserine mark. Glycyl lysine isopeptide (Lys-Gly) (interchain with G-Cter in SUMO2); alternate cross-links involve residues lysine 263, lysine 267, and lysine 273. A Glycyl lysine isopeptide (Lys-Gly) (interchain with G-Cter in SUMO); alternate cross-link involves residue lysine 263. Residues lysine 267 and lysine 273 each carry the N6-acetyllysine; alternate modification. Residue lysine 267 forms a Glycyl lysine isopeptide (Lys-Gly) (interchain with G-Cter in SUMO1); alternate linkage. Lysine 267 is subject to N6-succinyllysine; alternate. Residue threonine 279 is modified to Phosphothreonine. Lysine 292 carries the post-translational modification N6-acetyllysine.

The protein belongs to the nucleoplasmin family. Decamer formed by two pentameric rings associated in a head-to-head fashion. Disulfide-linked dimers under certain conditions. The SWAP complex consists of NPM1, NCL, PARP1 and SWAP70. Interacts with NSUN2 and SENP3. Interacts with the methylated form of RPS10. Interacts (via N-terminal domain) with APEX1; the interaction is RNA-dependent and decreases in hydrogen peroxide-damaged cells. Interacts with isoform 1 of NEK2. Interacts with ROCK2 and BRCA2. Interacts with RPGR. Interacts with CENPW. Interacts with EIF2AK2/PKR. Interacts with CEBPA (isoform 4). Interacts with DDX31; this interaction prevents interaction between NPM1 and HDM2. Interacts with MYC; competitive with NOP53. Interacts with NOP53; the interaction is direct and competitive with MYC. Interacts with LRRC34. Interacts with RRP1B. Interacts with NPM3. Interacts with ALKBH2. Interacts with TTF1 (via C-terminal region). Interacts with NOP2. Interacts with ARID3C (via REKLES DOMAIN); the interaction mediates ARID3C nuclear shuttling. Acetylated at C-terminal lysine residues, thereby increasing affinity to histones. In terms of processing, ADP-ribosylated. Post-translationally, phosphorylated at Ser-4 by PLK1 and PLK2. Phosphorylation at Ser-4 by PLK2 in S phase is required for centriole duplication and is sufficient to trigger centriole replication. Phosphorylation at Ser-4 by PLK1 takes place during mitosis. Phosphorylated by CDK2 at Ser-125 and Thr-200. Phosphorylation at Thr-200 may trigger initiation of centrosome duplication. Phosphorylated by CDK1 at Thr-200, Thr-219, Thr-234 and Thr-237 during cell mitosis. When these four sites are phosphorated, RNA-binding activity seem to be abolished. May be phosphorylated at Ser-70 by NEK2. The Thr-200 phosphorylated form has higher affinity for ROCK2. Sumoylated by ARF. In terms of processing, may be ubiquitinated. Ubiquitination leads to proteasomal degradation. Deubiquitinated by USP36.

It localises to the nucleus. Its subcellular location is the nucleolus. The protein localises to the nucleoplasm. The protein resides in the cytoplasm. It is found in the cytoskeleton. It localises to the microtubule organizing center. Its subcellular location is the centrosome. Involved in diverse cellular processes such as ribosome biogenesis, centrosome duplication, protein chaperoning, histone assembly, cell proliferation, and regulation of tumor suppressors p53/TP53 and ARF. Binds ribosome presumably to drive ribosome nuclear export. Associated with nucleolar ribonucleoprotein structures and bind single-stranded nucleic acids. Acts as a chaperonin for the core histones H3, H2B and H4. Stimulates APEX1 endonuclease activity on apurinic/apyrimidinic (AP) double-stranded DNA but inhibits APEX1 endonuclease activity on AP single-stranded RNA. May exert a control of APEX1 endonuclease activity within nucleoli devoted to repair AP on rDNA and the removal of oxidized rRNA molecules. In concert with BRCA2, regulates centrosome duplication. Regulates centriole duplication: phosphorylation by PLK2 is able to trigger centriole replication. Negatively regulates the activation of EIF2AK2/PKR and suppresses apoptosis through inhibition of EIF2AK2/PKR autophosphorylation. Antagonizes the inhibitory effect of ATF5 on cell proliferation and relieves ATF5-induced G2/M blockade. In complex with MYC enhances the transcription of MYC target genes. May act as chaperonin or cotransporter in the nucleolar localization of transcription termination factor TTF1. This chain is Nucleophosmin (NPM1), found in Bos taurus (Bovine).